The chain runs to 346 residues: Glucose-6-phosphatase 3 (346 aa).

Topologically, residues 1–24 are lumenal; it reads MESTLSAGIIMAEALQNRLPGLEN. Residues 25 to 45 traverse the membrane as a helical segment; it reads MWLWVTFLGDPKNLFQFCFPA. Topologically, residues 46-56 are cytoplasmic; it reads AYYASRRLGIS. A helical transmembrane segment spans residues 57–77; that stretch reads VLWITFIAEWLNLVFKWFLFG. Residues 78–108 lie on the Lumenal side of the membrane; the sequence is DRPFWWVHESGYSTQTPIQIHQFPSSCETGP. R79 serves as a coordination point for substrate. The chain crosses the membrane as a helical span at residues 109–129; the sequence is GSPSGHCMITGAALWPVMTAI. H114 (proton donor) is an active-site residue. Topologically, residues 130-138 are cytoplasmic; the sequence is SSQVASRSR. The helical transmembrane segment at 139-159 threads the bilayer; sequence SPWVRVIPGLAYCTFLLAVGL. Residues 160–167 lie on the Lumenal side of the membrane; the sequence is SRVFLLAH. R161 is a binding site for substrate. The active-site Nucleophile is the H167. A helical membrane pass occupies residues 168 to 186; it reads FPHQVLGGLIVGAALGWLM. Residues 187–197 are Cytoplasmic-facing; the sequence is SPRVPMERELS. A helical transmembrane segment spans residues 198–218; it reads FYGLTALALMLGASLMYWTLF. At 219 to 254 the chain is on the lumenal side; sequence TLGLDLSWSINLASKWCERPEWVHMDSRPFASLSRD. The chain crosses the membrane as a helical span at residues 255-273; the sequence is SGSALGLGIALHTPCYAQI. Over 274–283 the chain is Cytoplasmic; sequence RRAHLGNGQK. A helical membrane pass occupies residues 284–304; the sequence is IACFVLAMGLLVFLEWLGYPP. At 305–307 the chain is on the lumenal side; the sequence is QIS. Residues 308-328 traverse the membrane as a helical segment; it reads LFYIFNFLKYTLWPCLVLALV. Topologically, residues 329–346 are cytoplasmic; the sequence is PWVVHTLSDQEAPPIRSS.

It belongs to the glucose-6-phosphatase family. Widely expressed. Highly expressed in heart and testis and to a lower extent in spleen, stomach, small intestine, skeletal muscle and uterus. Expressed in muscle, brain, thymus, lung, kidney, spleen and pancreas (at protein level). In the brain, expressed in astrocytes (at protein level).

It is found in the endoplasmic reticulum membrane. It carries out the reaction D-glucose 6-phosphate + H2O = D-glucose + phosphate. Its pathway is carbohydrate biosynthesis; gluconeogenesis. With respect to regulation, inhibited by vanadate. Functionally, hydrolyzes glucose-6-phosphate to glucose in the endoplasmic reticulum. May form with the glucose-6-phosphate transporter (SLC37A4/G6PT) a ubiquitously expressed complex responsible for glucose production through glycogenolysis and gluconeogenesis. Probably required for normal neutrophil function. The polypeptide is Glucose-6-phosphatase 3 (G6pc3) (Mus musculus (Mouse)).